The following is an 80-amino-acid chain: Small ribosomal subunit protein bS18 (80 aa).

It belongs to the bacterial ribosomal protein bS18 family. In terms of assembly, part of the 30S ribosomal subunit. Forms a tight heterodimer with protein bS6.

Its function is as follows. Binds as a heterodimer with protein bS6 to the central domain of the 16S rRNA, where it helps stabilize the platform of the 30S subunit. The protein is Small ribosomal subunit protein bS18 of Methylocella silvestris (strain DSM 15510 / CIP 108128 / LMG 27833 / NCIMB 13906 / BL2).